A 915-amino-acid polypeptide reads, in one-letter code: Protein translocase subunit SecA (915 aa).

ATP contacts are provided by residues Gln-87, 105 to 109, and Asp-516; that span reads GEGKT. The segment at 854-915 is disordered; it reads QKMQMRHEQL…KYKNCHGQLE (62 aa). Zn(2+)-binding residues include Cys-899, Cys-901, Cys-910, and His-911.

It belongs to the SecA family. As to quaternary structure, monomer and homodimer. Part of the essential Sec protein translocation apparatus which comprises SecA, SecYEG and auxiliary proteins SecDF-YajC and YidC. Zn(2+) is required as a cofactor.

The protein resides in the cell inner membrane. The protein localises to the cytoplasm. It carries out the reaction ATP + H2O + cellular proteinSide 1 = ADP + phosphate + cellular proteinSide 2.. Functionally, part of the Sec protein translocase complex. Interacts with the SecYEG preprotein conducting channel. Has a central role in coupling the hydrolysis of ATP to the transfer of proteins into and across the cell membrane, serving both as a receptor for the preprotein-SecB complex and as an ATP-driven molecular motor driving the stepwise translocation of polypeptide chains across the membrane. In Cellvibrio japonicus (strain Ueda107) (Pseudomonas fluorescens subsp. cellulosa), this protein is Protein translocase subunit SecA.